An 84-amino-acid chain; its full sequence is Metallothionein-like protein 2C (84 aa).

Belongs to the metallothionein superfamily. Type 15 family.

Its subcellular location is the cytoplasm. The protein resides in the cytosol. Functionally, metallothioneins have a high content of cysteine residues that bind various heavy metals. Acts as a reactive oxygen species (ROS) scavenger in the cytosol. Possesses superoxide anion and hydroxyl radical scavenging activities in vitro. Plays a role during root development, lateral root initiation and seed embryo germination, possibly by regulating levels of cytokinin. This Oryza sativa subsp. indica (Rice) protein is Metallothionein-like protein 2C (MT2C).